A 391-amino-acid polypeptide reads, in one-letter code: Digeranylgeranylglycerophospholipid reductase (391 aa).

FAD contacts are provided by G19, D38, C49, A50, A52, R99, V123, D279, G291, and I292. Residue V369 participates in a 2,3-bis-O-(geranylgeranyl)-sn-glycerol 1-phospholipid binding.

It belongs to the geranylgeranyl reductase family. DGGGPL reductase subfamily. FAD serves as cofactor.

The enzyme catalyses a 2,3-bis-O-phytanyl-sn-glycerol 1-phospholipid + 8 A = a 2,3-bis-O-(geranylgeranyl)-sn-glycerol 1-phospholipid + 8 AH2. The catalysed reaction is 2,3-bis-O-(phytanyl)-sn-glycerol 1-phosphate + 8 A = 2,3-bis-O-(geranylgeranyl)-sn-glycerol 1-phosphate + 8 AH2. It catalyses the reaction CDP-2,3-bis-O-(geranylgeranyl)-sn-glycerol + 8 AH2 = CDP-2,3-bis-O-(phytanyl)-sn-glycerol + 8 A. It carries out the reaction archaetidylserine + 8 AH2 = 2,3-bis-O-phytanyl-sn-glycero-3-phospho-L-serine + 8 A. Its pathway is membrane lipid metabolism; glycerophospholipid metabolism. Its function is as follows. Is involved in the reduction of 2,3-digeranylgeranylglycerophospholipids (unsaturated archaeols) into 2,3-diphytanylglycerophospholipids (saturated archaeols) in the biosynthesis of archaeal membrane lipids. Catalyzes the formation of archaetidic acid (2,3-di-O-phytanyl-sn-glyceryl phosphate) from 2,3-di-O-geranylgeranylglyceryl phosphate (DGGGP) via the hydrogenation of each double bond of the isoprenoid chains. Is also probably able to reduce double bonds of geranyl groups in CDP-2,3-bis-O-(geranylgeranyl)-sn-glycerol and archaetidylserine, thus acting at various stages in the biosynthesis of archaeal membrane lipids. This Methanococcus aeolicus (strain ATCC BAA-1280 / DSM 17508 / OCM 812 / Nankai-3) protein is Digeranylgeranylglycerophospholipid reductase.